Consider the following 1002-residue polypeptide: Chitin synthase II (1002 aa).

Disordered regions lie at residues 1–165 (MDRP…GRTS) and 178–209 (LDGSDDVFGPETDLSDSRPLPTHRDSFMSGSQ). The span at 63–78 (SYQPSVVSSHSRSASV) shows a compositional bias: low complexity. Asparagine 123 carries an N-linked (GlcNAc...) asparagine glycan. Residue asparagine 336 is glycosylated (N-linked (GlcNAc...) asparagine). A run of 8 helical transmembrane segments spans residues 627–647 (WLNGAFFAAVYSLVQFRQILA), 669–689 (LLFTYFSLANFYLTFYFVAGG), 704–724 (SVIFTILRYTCVLLIATQFIL), 740–760 (SMIIYGVIMTYTSFACIYIVV), 780–800 (LIVSMASTIGLYFVMSFLYLE), 808–828 (SLQYFLLLPSYICTLQVYAFC), 906–926 (YMVVTWMIANGILAMAVSEIY), and 940–960 (ILWAVASLAIFRALGSTTFAI).

Belongs to the chitin synthase family. Class II subfamily. As to expression, expressed in hyphal bodies.

It is found in the cell membrane. It carries out the reaction [(1-&gt;4)-N-acetyl-beta-D-glucosaminyl](n) + UDP-N-acetyl-alpha-D-glucosamine = [(1-&gt;4)-N-acetyl-beta-D-glucosaminyl](n+1) + UDP + H(+). In terms of biological role, polymerizes chitin, a structural polymer of the cell wall and septum, by transferring the sugar moiety of UDP-GlcNAc to the non-reducing end of the growing chitin polymer. Contributes to the production of conidia and the ability of fungal conidia to germinate. Involved in fungal stress tolerances. The polypeptide is Chitin synthase II (Metarhizium acridum (strain CQMa 102)).